The following is a 259-amino-acid chain: Taurine import ATP-binding protein TauB (259 aa).

The 230-residue stretch at 4–233 folds into the ABC transporter domain; the sequence is LELERISAQY…RYAAGESARA (230 aa). 38–45 contributes to the ATP binding site; the sequence is GPSGSGKT.

This sequence belongs to the ABC transporter superfamily. Taurine importer (TC 3.A.1.17.1) family. The complex is composed of two ATP-binding proteins (TauB), two transmembrane proteins (TauC) and a solute-binding protein (TauA).

The protein resides in the cell inner membrane. The enzyme catalyses taurine(out) + ATP + H2O = taurine(in) + ADP + phosphate + H(+). In terms of biological role, part of the ABC transporter complex TauABC involved in taurine import. Responsible for energy coupling to the transport system. This is Taurine import ATP-binding protein TauB from Pseudomonas entomophila (strain L48).